Reading from the N-terminus, the 355-residue chain is MGCASSAEERAAPSAQQADREKLKEDGIQAAKDIKLLLLGAGESGKSTIVKQMKIIHESGFTNEDFKQYRPVVYSNTIQSLVAILRAMPTLGITYANKDRESDGKMVFDVIQRMEDTEPFSEELLAAMKRLWADAGVQECFGRSNEYQLNDSAKYFLDDLDRLGARDYQPTEEDILRTRVKTTGIVEVHFSFKNLNFKLFDVGRGQRSERKKWIHCFEDVTAIIFCVAMSEYDQVLHEDETTNRMQESLKLFDSICNNKWFTDTSIILFLNKKDLFEEKIRKSPLTICFPEYTRAYQEYGEAAAYIRSQFEAKNNSTTKEIYCHMTATDTNNNQFVFDAVTDVIIANNLRGCGLY.

Residues 1–17 (MGCASSAEERAAPSAQQ) show a composition bias toward low complexity. The tract at residues 1 to 24 (MGCASSAEERAAPSAQQADREKLK) is disordered. Residue Gly2 is the site of N-myristoyl glycine attachment. Cys3 carries S-palmitoyl cysteine lipidation. In terms of domain architecture, G-alpha spans 32-355 (KDIKLLLLGA…ANNLRGCGLY (324 aa)). A G1 motif region spans residues 35-48 (KLLLLGAGESGKST). GTP-binding positions include 40–47 (GAGESGKS), 176–182 (LRTRVKT), 201–205 (DVGRG), 201–206 (DVGRGQ), 271–274 (NKKD), and Ala327. Ser47 and Thr182 together coordinate Mg(2+). Residues 174-182 (DILRTRVKT) form a G2 motif region. The tract at residues 197 to 206 (FKLFDVGRGQ) is G3 motif. Positions 267–274 (ILFLNKKD) are G4 motif. A G5 motif region spans residues 326–330 (TATDT).

It belongs to the G-alpha family. G(i/o/t/z) subfamily. G proteins are composed of 3 units; alpha, beta and gamma. The alpha chain contains the guanine nucleotide binding site.

Its function is as follows. Guanine nucleotide-binding proteins (G proteins) are involved as modulators or transducers in various transmembrane signaling systems. The G(o) protein function is not clear. This is Guanine nucleotide-binding protein G(o) subunit alpha from Manduca sexta (Tobacco hawkmoth).